Reading from the N-terminus, the 161-residue chain is Troponin C, slow skeletal and cardiac muscles (161 aa).

Position 1 is an N-acetylmethionine (Met-1). 4 EF-hand domains span residues 16–51 (QKNE…LGQN), 52–87 (PTPE…CMKD), 92–127 (KSEE…TGET), and 128–161 (ITED…KGVE). The Ca(2+) site is built by Asp-65, Asp-67, Ser-69, Thr-71, and Glu-76. Residue Ser-98 is modified to Phosphoserine. Residues Asp-105, Asn-107, Asp-109, Tyr-111, Glu-116, Asp-141, Asn-143, Asp-145, Arg-147, and Glu-152 each contribute to the Ca(2+) site.

The protein belongs to the troponin C family.

In terms of biological role, troponin is the central regulatory protein of striated muscle contraction. Tn consists of three components: Tn-I which is the inhibitor of actomyosin ATPase, Tn-T which contains the binding site for tropomyosin and Tn-C. The binding of calcium to Tn-C abolishes the inhibitory action of Tn on actin filaments. In Mus musculus (Mouse), this protein is Troponin C, slow skeletal and cardiac muscles (Tnnc1).